The primary structure comprises 208 residues: Pyrophosphate-energized proton pump 2 (208 aa).

A run of 5 helical transmembrane segments spans residues 19–39, 54–74, 89–109, 140–160, and 167–187; these read AYPL…TFFV, GLIV…SFTI, GGNL…IVVI, LAVS…GIIA, and LFGT…IVAL.

It belongs to the H(+)-translocating pyrophosphatase (TC 3.A.10) family. In terms of assembly, homodimer. Mg(2+) serves as cofactor.

The protein resides in the cell inner membrane. It carries out the reaction diphosphate + H2O + H(+)(in) = 2 phosphate + 2 H(+)(out). Proton pump that utilizes the energy of pyrophosphate hydrolysis as the driving force for proton movement across the membrane. Generates a proton motive force. The chain is Pyrophosphate-energized proton pump 2 (hppA2) from Mycoplana dimorpha.